Reading from the N-terminus, the 226-residue chain is UPF0173 metal-dependent hydrolase GFO_2312 (226 aa).

Belongs to the UPF0173 family.

The polypeptide is UPF0173 metal-dependent hydrolase GFO_2312 (Christiangramia forsetii (strain DSM 17595 / CGMCC 1.15422 / KT0803) (Gramella forsetii)).